Consider the following 702-residue polypeptide: Arylphorin subunit alpha (702 aa).

Positions 1–16 are cleaved as a signal peptide; sequence MKTVVILAGLVALALS. N-linked (GlcNAc...) asparagine glycosylation is found at Asn75 and Asn214.

This sequence belongs to the hemocyanin family. In terms of assembly, arylphorin is a hexamer of subunits alpha and beta. Fat body.

It localises to the secreted. It is found in the extracellular space. Arylphorin is a larval storage protein (LSP) which may serve as a storage protein used primarily as a source of aromatic amino acids for protein synthesis during metamorphosis. It is a constituent of the sclerotizing system of the cuticle, and serves as a carrier for ecdysteroid hormone. In Manduca sexta (Tobacco hawkmoth), this protein is Arylphorin subunit alpha.